Here is an 82-residue protein sequence, read N- to C-terminus: Acyl carrier protein (82 aa).

One can recognise a Carrier domain in the interval 4-79 (PEMEERLRKI…DALNYLETHQ (76 aa)). S39 bears the O-(pantetheine 4'-phosphoryl)serine mark.

The protein belongs to the acyl carrier protein (ACP) family. 4'-phosphopantetheine is transferred from CoA to a specific serine of apo-ACP by AcpS. This modification is essential for activity because fatty acids are bound in thioester linkage to the sulfhydryl of the prosthetic group.

The protein localises to the cytoplasm. Its pathway is lipid metabolism; fatty acid biosynthesis. Carrier of the growing fatty acid chain in fatty acid biosynthesis. This Chloroflexus aurantiacus (strain ATCC 29366 / DSM 635 / J-10-fl) protein is Acyl carrier protein.